Here is a 239-residue protein sequence, read N- to C-terminus: Ubiquinone biosynthesis O-methyltransferase (239 aa).

Positions 44, 63, 84, and 128 each coordinate S-adenosyl-L-methionine.

The protein belongs to the methyltransferase superfamily. UbiG/COQ3 family.

The catalysed reaction is a 3-demethylubiquinol + S-adenosyl-L-methionine = a ubiquinol + S-adenosyl-L-homocysteine + H(+). It carries out the reaction a 3-(all-trans-polyprenyl)benzene-1,2-diol + S-adenosyl-L-methionine = a 2-methoxy-6-(all-trans-polyprenyl)phenol + S-adenosyl-L-homocysteine + H(+). Its pathway is cofactor biosynthesis; ubiquinone biosynthesis. Its function is as follows. O-methyltransferase that catalyzes the 2 O-methylation steps in the ubiquinone biosynthetic pathway. The protein is Ubiquinone biosynthesis O-methyltransferase of Xanthomonas euvesicatoria pv. vesicatoria (strain 85-10) (Xanthomonas campestris pv. vesicatoria).